Reading from the N-terminus, the 559-residue chain is DNA ligase (559 aa).

Glu248 lines the ATP pocket. Lys250 acts as the N6-AMP-lysine intermediate in catalysis. The ATP site is built by Arg255, Arg270, Glu300, Phe341, Arg417, and Lys423.

It belongs to the ATP-dependent DNA ligase family. Mg(2+) is required as a cofactor.

The catalysed reaction is ATP + (deoxyribonucleotide)n-3'-hydroxyl + 5'-phospho-(deoxyribonucleotide)m = (deoxyribonucleotide)n+m + AMP + diphosphate.. Its function is as follows. DNA ligase that seals nicks in double-stranded DNA during DNA replication, DNA recombination and DNA repair. The sequence is that of DNA ligase from Methanopyrus kandleri (strain AV19 / DSM 6324 / JCM 9639 / NBRC 100938).